We begin with the raw amino-acid sequence, 326 residues long: tRNA-modifying protein YgfZ (326 aa).

Folate contacts are provided by Trp27 and Trp189.

The protein belongs to the tRNA-modifying YgfZ family.

It localises to the cytoplasm. Folate-binding protein involved in regulating the level of ATP-DnaA and in the modification of some tRNAs. It is probably a key factor in regulatory networks that act via tRNA modification, such as initiation of chromosomal replication. In Escherichia coli O17:K52:H18 (strain UMN026 / ExPEC), this protein is tRNA-modifying protein YgfZ.